Here is a 422-residue protein sequence, read N- to C-terminus: Synaptotagmin-2 (422 aa).

Residues 1–43 are disordered; sequence MRNIFKRNQEPNVAPATTTATMPLAPVAPADNSTESTGPGESQ. Residues 1 to 60 are Vesicular-facing; sequence MRNIFKRNQEPNVAPATTTATMPLAPVAPADNSTESTGPGESQEDMFAKLKEKFFNEINK. A compositionally biased stretch (low complexity) spans 14–30; sequence APATTTATMPLAPVAPA. The segment covering 31–40 has biased composition (polar residues); that stretch reads DNSTESTGPG. Asn-32 carries an N-linked (GlcNAc...) asparagine glycan. The chain crosses the membrane as a helical span at residues 61–87; sequence IPLPPWALIAMAVVAGLLLLTCCFCIC. Residues 88–422 are Cytoplasmic-facing; the sequence is KKCCCKKKKN…EVDALLGKNK (335 aa). Positions 102–141 are disordered; that stretch reads GKGMKNAMNMKDMKGGQDDDDAETGLTEGEGEGEEEKEPE. Acidic residues predominate over residues 119–139; sequence DDDDAETGLTEGEGEGEEEKE. A phosphothreonine mark is found at Thr-125 and Thr-128. A phospholipid binding region spans residues 136–382; that stretch reads EEKEPENLGK…AIGKIFVGSN (247 aa). C2 domains follow at residues 142-261 and 273-406; these read NLGK…EEWR and KLGD…AQWH. Leu-172, Asp-173, and Asp-179 together coordinate Ca(2+). Residue Thr-202 is modified to Phosphothreonine. Tyr-230 carries the phosphotyrosine modification. Ca(2+) contacts are provided by Asp-231, Phe-232, Asp-233, Ser-236, Lys-237, Asp-239, Asp-304, Asp-310, Asp-364, and Asp-366. At Thr-386 the chain carries Phosphothreonine.

The protein belongs to the synaptotagmin family. As to quaternary structure, homotetramer. Heterodimer; heterodimerizes with SYT1 in presence of calcium. Interacts with SCAMP5. Interacts with STON2. Interacts with PRRT2. In terms of assembly, (Microbial infection) Interacts with C.botulinum neurotoxin type B (BoNT/B, botB). (Microbial infection) Interacts with C.botulinum neurotoxin type G (BoNT/G, botG). It depends on Ca(2+) as a cofactor. Post-translationally, phosphorylation at Thr-202 by WNK1, changes the calcium requirement for SYT2-binding to phospholipid membranes.

It is found in the cytoplasmic vesicle. The protein resides in the secretory vesicle. Its subcellular location is the synaptic vesicle membrane. The protein localises to the chromaffin granule membrane. It localises to the cytoplasm. In terms of biological role, exhibits calcium-dependent phospholipid and inositol polyphosphate binding properties. May have a regulatory role in the membrane interactions during trafficking of synaptic vesicles at the active zone of the synapse. Plays a role in dendrite formation by melanocytes. (Microbial infection) Receptor for C.botulinum neurotoxin type B (BoNT/B, botB); interaction is improved in the presence of gangliosides. The toxin binds via the vesicular domain (residues 47-60). Its function is as follows. (Microbial infection) Receptor for C.botulinum neurotoxin type G (BoNT/G, botG); gangliosides are not required for (or only very slightly improve) binding to a membrane-anchored receptor fragment. The toxin binds via the vesicular domain (residues 47-55). This chain is Synaptotagmin-2, found in Mus musculus (Mouse).